A 727-amino-acid chain; its full sequence is Phosphoribosylformylglycinamidine synthase subunit PurL (727 aa).

His47 is an active-site residue. ATP-binding residues include Tyr50 and Lys89. A Mg(2+)-binding site is contributed by Glu91. Substrate contacts are provided by residues 92–95 (SHNH) and Arg114. The Proton acceptor role is filled by His93. Asp115 is a binding site for Mg(2+). A substrate-binding site is contributed by Gln238. Asp266 is a Mg(2+) binding site. 310–312 (ESQ) is a binding site for substrate. ATP is bound by residues Asp490 and Gly527. Asn528 serves as a coordination point for Mg(2+). Ser530 serves as a coordination point for substrate.

The protein belongs to the FGAMS family. Monomer. Part of the FGAM synthase complex composed of 1 PurL, 1 PurQ and 2 PurS subunits.

It is found in the cytoplasm. It catalyses the reaction N(2)-formyl-N(1)-(5-phospho-beta-D-ribosyl)glycinamide + L-glutamine + ATP + H2O = 2-formamido-N(1)-(5-O-phospho-beta-D-ribosyl)acetamidine + L-glutamate + ADP + phosphate + H(+). The protein operates within purine metabolism; IMP biosynthesis via de novo pathway; 5-amino-1-(5-phospho-D-ribosyl)imidazole from N(2)-formyl-N(1)-(5-phospho-D-ribosyl)glycinamide: step 1/2. In terms of biological role, part of the phosphoribosylformylglycinamidine synthase complex involved in the purines biosynthetic pathway. Catalyzes the ATP-dependent conversion of formylglycinamide ribonucleotide (FGAR) and glutamine to yield formylglycinamidine ribonucleotide (FGAM) and glutamate. The FGAM synthase complex is composed of three subunits. PurQ produces an ammonia molecule by converting glutamine to glutamate. PurL transfers the ammonia molecule to FGAR to form FGAM in an ATP-dependent manner. PurS interacts with PurQ and PurL and is thought to assist in the transfer of the ammonia molecule from PurQ to PurL. This chain is Phosphoribosylformylglycinamidine synthase subunit PurL, found in Acidiphilium cryptum (strain JF-5).